A 223-amino-acid chain; its full sequence is Proteasome subunit beta type-1 (223 aa).

The protein belongs to the peptidase T1B family. Component of the 20S core complex of the 26S proteasome. The 26S proteasome is composed of a core protease (CP), known as the 20S proteasome, capped at one or both ends by the 19S regulatory particle (RP/PA700). The 20S proteasome core is composed of 28 subunits that are arranged in four stacked rings, resulting in a barrel-shaped structure. The two end rings are each formed by seven alpha subunits, and the two central rings are each formed by seven beta subunits. The catalytic chamber with the active sites is on the inside of the barrel. Present in all tissues examined. Slightly lower levels in roots.

The protein localises to the cytoplasm. It localises to the nucleus. In terms of biological role, non-catalytic component of the proteasome, a multicatalytic proteinase complex which is characterized by its ability to cleave peptides with Arg, Phe, Tyr, Leu, and Glu adjacent to the leaving group at neutral or slightly basic pH. The proteasome has an ATP-dependent proteolytic activity. This chain is Proteasome subunit beta type-1 (PBF1), found in Arabidopsis thaliana (Mouse-ear cress).